Here is a 121-residue protein sequence, read N- to C-terminus: Basic phospholipase A2 homolog 2 (121 aa).

7 disulfide bridges follow: Cys-26-Cys-115, Cys-28-Cys-44, Cys-43-Cys-95, Cys-49-Cys-121, Cys-50-Cys-88, Cys-57-Cys-81, and Cys-75-Cys-86. The segment at 105–117 is important for membrane-damaging activities in eukaryotes and bacteria; heparin-binding; the sequence is KKYRYHLKPLCKK.

This sequence belongs to the phospholipase A2 family. Group II subfamily. K49 sub-subfamily. In terms of assembly, homodimer; non-covalently linked (probable alternative/compact dimer conformation in solution). In terms of tissue distribution, expressed by the venom gland.

The protein resides in the secreted. In terms of biological role, snake venom phospholipase A2 homolog that lacks enzymatic activity. Is myotoxic and displays edema-inducing activities in mouse paw. Also displays cytotoxic activity against myotubes. A model of myotoxic mechanism has been proposed: an apo Lys49-PLA2 is activated by the entrance of a hydrophobic molecule (e.g. fatty acid) at the hydrophobic channel of the protein leading to a reorientation of a monomer. This reorientation causes a transition between 'inactive' to 'active' states, causing alignment of C-terminal and membrane-docking sites (MDoS) side-by-side and putting the membrane-disruption sites (MDiS) in the same plane, exposed to solvent and in a symmetric position for both monomers. The MDoS region stabilizes the toxin on membrane by the interaction of charged residues with phospholipid head groups. Subsequently, the MDiS region destabilizes the membrane with penetration of hydrophobic residues. This insertion causes a disorganization of the membrane, allowing an uncontrolled influx of ions (i.e. calcium and sodium), and eventually triggering irreversible intracellular alterations and cell death. This chain is Basic phospholipase A2 homolog 2, found in Bothrops brazili (Brazil's lancehead).